The sequence spans 257 residues: Protein-tyrosine-phosphatase IBR5 (257 aa).

Residues 49–185 (FPSEILPEFL…LQEFEQGIFG (137 aa)) form the Tyrosine-protein phosphatase domain. Catalysis depends on Cys129, which acts as the Phosphocysteine intermediate. The disordered stretch occupies residues 235-257 (QEFTFGATPPKPTTGGDIAMDGS).

This sequence belongs to the protein-tyrosine phosphatase family. Interacts with SKP1A/ASK1 and with MPK12. As to expression, expressed in root tips and vasculature, cotyledons, stems, leaves vasculature and hydathodes, flowers, siliques, and seeds.

Its subcellular location is the nucleus. It carries out the reaction O-phospho-L-tyrosyl-[protein] + H2O = L-tyrosyl-[protein] + phosphate. Functionally, required for the transduction of auxin and abscisic acid (ABA) signaling pathways. Dephosphorylates and inactivates the MAP kinase MPK12. The sequence is that of Protein-tyrosine-phosphatase IBR5 (IBR5) from Arabidopsis thaliana (Mouse-ear cress).